Reading from the N-terminus, the 104-residue chain is Large ribosomal subunit protein eL30 (104 aa).

It belongs to the eukaryotic ribosomal protein eL30 family.

This chain is Large ribosomal subunit protein eL30 (rpl30e), found in Sulfolobus acidocaldarius (strain ATCC 33909 / DSM 639 / JCM 8929 / NBRC 15157 / NCIMB 11770).